Reading from the N-terminus, the 406-residue chain is COP9 signalosome complex subunit 4 (406 aa).

Residue Ala-2 is modified to N-acetylalanine. Lys-25 carries the N6-acetyllysine modification. Positions 197–366 (YRRKFIEAAQ…GIVHFETREA (170 aa)) constitute a PCI domain.

The protein belongs to the CSN4 family. As to quaternary structure, component of the CSN complex, composed of COPS1/GPS1, COPS2, COPS3, COPS4, COPS5, COPS6, COPS7 (COPS7A or COPS7B), COPS8 and COPS9. In the complex, it probably interacts directly with COPS1, COPS2, COPS3, COPS5, COPS6, COPS7 (COPS7A or COPS7B) and COPS8. Interacts with TOR1A; the interaction is direct and associates TOR1A and SNAPIN with the CSN complex. Interacts with STON2; controls STON2 neddylation levels. Interacts with ERCC6.

The protein localises to the cytoplasm. It localises to the nucleus. It is found in the cytoplasmic vesicle. The protein resides in the secretory vesicle. Its subcellular location is the synaptic vesicle. Its function is as follows. Component of the COP9 signalosome complex (CSN), a complex involved in various cellular and developmental processes. The CSN complex is an essential regulator of the ubiquitin (Ubl) conjugation pathway by mediating the deneddylation of the cullin subunits of SCF-type E3 ligase complexes, leading to decrease the Ubl ligase activity of SCF-type complexes such as SCF, CSA or DDB2. Also involved in the deneddylation of non-cullin subunits such as STON2. The complex is also involved in phosphorylation of p53/TP53, c-jun/JUN, IkappaBalpha/NFKBIA, ITPK1, IRF8/ICSBP and SNAPIN, possibly via its association with CK2 and PKD kinases. CSN-dependent phosphorylation of TP53 and JUN promotes and protects degradation by the Ubl system, respectively. This chain is COP9 signalosome complex subunit 4 (COPS4), found in Bos taurus (Bovine).